The following is a 404-amino-acid chain: MERDLESAPPSAPRPPLGPPLSSSIGLALLLLLLALLFWLYIVMSDWTGGALLVLYSFALMLIIIILIIFIFRRDLLCPLGGLGLLLLMITLLLIALWNLHGQALYLGIVLFIFGCLLVFGIWIYFLEILWRLGATLWQLLAFILAFFLAIILLIIALYLQQNWWTLLVDLLWLLLFMAILIWMYYHGPRHTDEHHHDDSLPHPQQATDDSSHESDSNSNEGRHHLLVSGAGDGPPLCSQNLGAPGGGPDNGPQDPDNTDDNGPQDPDNTDDNGPQDPDNTDDNGPQDPDNTDDNGPQDPDNTDDNGPQDPDNTDDNGPQDPDNTDDNGPHDPLPHSPSDSAGNDGGPPNLTEEVANKGGDRGPPSMTDGGGGDPHLPTLLLGTSGSGGDDDDPHGPVQLSYYD.

The Cytoplasmic segment spans residues 1–23 (MERDLESAPPSAPRPPLGPPLSS). A helical transmembrane segment spans residues 24–44 (SIGLALLLLLLALLFWLYIVM). Topologically, residues 45 to 51 (SDWTGGA) are extracellular. A helical membrane pass occupies residues 52-72 (LLVLYSFALMLIIIILIIFIF). At 73–75 (RRD) the chain is on the cytoplasmic side. The helical transmembrane segment at 76–96 (LLCPLGGLGLLLLMITLLLIA) threads the bilayer. Over 97-106 (LWNLHGQALY) the chain is Extracellular. A helical membrane pass occupies residues 107–127 (LGIVLFIFGCLLVFGIWIYFL). Over 128–139 (EILWRLGATLWQ) the chain is Cytoplasmic. The helical transmembrane segment at 140-160 (LLAFILAFFLAIILLIIALYL) threads the bilayer. Over 161–163 (QQN) the chain is Extracellular. A helical transmembrane segment spans residues 164–184 (WWTLLVDLLWLLLFMAILIWM). The Cytoplasmic portion of the chain corresponds to 185 to 404 (YYHGPRHTDE…HGPVQLSYYD (220 aa)). The tract at residues 194-232 (EHHHDDSLPHPQQATDDSSHESDSNSNEGRHHLLVSGAG) is CTAR1. Residues 194 to 404 (EHHHDDSLPH…HGPVQLSYYD (211 aa)) are disordered. The short motif at 204–208 (PQQAT) is the Interaction with host TRAF proteins element. Over residues 210–224 (DSSHESDSNSNEGRH) the composition is skewed to basic and acidic residues. Composition is skewed to low complexity over residues 251 to 322 (NGPQ…PQDP) and 375 to 384 (PHLPTLLLGT). The segment at 370 to 404 (GGGGDPHLPTLLLGTSGSGGDDDDPHGPVQLSYYD) is CTAR2.

The protein belongs to the herpesviridae LMP-1 family. Interacts (via PXQXT motif) with host tumor necrosis factor receptor-associated factor (TRAF) proteins TRAF1, TRAF2, TRAF3 and TRAF5. Interacts with human protein ZMYND11; leading to negatively regulate NF-kappa-B activation. Interacts with host UBE2I; this interaction induces the sumoylation of various cellular proteins. Interacts with host IRF7. Interacts with host TYK2. Post-translationally, ubiquitinated on the N-terminus.

Its subcellular location is the host cell membrane. Functionally, acts as a CD40 functional homolog to prevent apoptosis of infected B-lymphocytes and drive their proliferation. Functions as a constitutively active tumor necrosis factor receptor that induces the activation of several signaling pathways, including those of the NF-kappa-B family. LMP1 signaling leads to up-regulation of antiapoptotic proteins and provide growth signals in latently infected cells. Interacts with host UBE2I and subsequently affects the sumoylation state of several cellular proteins. For example, induces the sumoylation of host IRF7 thereby limiting its transcriptional activity and modulating the activation of innate immune responses. Also inhibits host IFN-alpha-stimulated STAT2 nuclear translocation and interferon-stimulated response element transcriptional activity by interacting with and inhibiting host TYK2. Induces SUMO expression during viral latency thereby dysregulating the host sumoylation processes. In Homo sapiens (Human), this protein is Latent membrane protein 1 (LMP1).